The primary structure comprises 447 residues: Trichothecene C-3 esterase (447 aa).

The signal sequence occupies residues 1–22 (MALNRLVFSLSLWLGFIGAAQA). N-linked (GlcNAc...) asparagine glycosylation is found at asparagine 59, asparagine 66, asparagine 136, and asparagine 189. Catalysis depends on serine 202, which acts as the Charge relay system. 3 N-linked (GlcNAc...) asparagine glycosylation sites follow: asparagine 238, asparagine 284, and asparagine 314. Residues aspartate 352 and histidine 384 each act as charge relay system in the active site. 2 N-linked (GlcNAc...) asparagine glycosylation sites follow: asparagine 389 and asparagine 423.

It belongs to the AB hydrolase superfamily. Lipase family.

The protein operates within sesquiterpene biosynthesis; trichothecene biosynthesis. Functionally, trichothecene C-3 esterase; part of the core gene cluster that mediates the biosynthesis of trichothecenes, a very large family of chemically related bicyclic sesquiterpene compounds acting as mycotoxins, including T2-toxin. The biosynthesis of trichothecenes begins with the cyclization of farnesyl diphosphate to trichodiene and is catalyzed by the trichodiene synthase TRI5. Trichodiene undergoes a series of oxygenations catalyzed by the cytochrome P450 monooxygenase TRI4. TRI4 controls the addition of four oxygens at C-2, C-3, C-11, and the C-12, C-13-epoxide to form the intermediate isotrichotriol. Isotrichotriol then undergoes a non-enzymatic isomerization and cyclization to form isotrichodermol. During this process, the oxygen at the C-2 position becomes the pyran ring oxygen and the hydroxyl group at C-11 is lost. More complex type A trichothecenes are built by modifying isotrichodermol through a series of paired hydroxylation and acetylation or acylation steps. Isotrichodermol is converted to isotrichodermin by the acetyltransferase TRI101. TRI101 encodes a C-3 transacetylase that acts as a self-protection or resistance factor during biosynthesis and that the presence of a free C-3 hydroxyl group is a key component of Fusarium trichothecene phytotoxicity. A second hydroxyl group is added to C-15 by the trichothecene C-15 hydroxylase TRI11, producing 15-decalonectrin, which is then acetylated by TRI3, producing calonectrin. A third hydroxyl group is added at C-4 by the cytochrome P450 monooxygenase TRI13, converting calonectrin to 3,15-diacetoxyspirpenol, which is subsequently acetylated by the acetyltransferase TRI7. A fourth hydroxyl group is added to C-8 by the cytochrome P450 monooxygenase TRI1, followed by the addition of an isovaleryl moiety by TRI16. Finally, the acetyl group is removed from the C-3 position by the trichothecene C-3 esterase TRI8 to produce T-2 toxin. This Fusarium sporotrichioides protein is Trichothecene C-3 esterase.